The primary structure comprises 177 residues: MLGSRFLLLALGLLVLVLAEESAEQQVQEPTELEKSGEQLSEEDLIDEQKRTPMQRSSMVRFGRSPMQRSSMVRFGKRSPMQRSSMVRFGKRSPMQRSSMVRFGKRSPMERSAMVRFGRSPMDRSKMVRFGRSSIDRASMVRLGKRTPMQRSSMVRFGKRSMEFEMQSNEKNIEDSE.

Residues Met-1–Ala-19 form the signal peptide. The propeptide occupies Glu-20 to Gln-49. A disordered region spans residues Gln-25 to Arg-106. 6 positions are modified to phenylalanine amide: Phe-62, Phe-75, Phe-89, Phe-103, Phe-117, and Phe-130. Leu-143 is modified (leucine amide). Residue Phe-157 is modified to Phenylalanine amide. Positions Ser-161–Glu-177 are excised as a propeptide.

It belongs to the FARP (FMRFamide related peptide) family. As to expression, expressed in the ASI sensory neurons, the ALA interneuron and the AVG interneuron from where secretion occurs. Expression in the ASI neurons is necessary and sufficient to maintain serotonin-induced fat loss.

The protein localises to the secreted. Its function is as follows. FMRFamide-like neuropeptides. Stimulates serotonin-induced fat loss by binding to and activating the npr-22 receptor which leads to induction of the atgl-1 lipase and subsequent fat loss. Together with atfs-1, negatively regulates the expression of the transcription regulator hlh-11, to promote expression of atgl-1, and thus atgl-1-dependent fat oxidation in response to mitochondrial stress. TPMQRSSMVRF-amide: Acts as a ligand for the npr-22 receptor in vitro. Functionally, SPMQRSSMVRF-amide: Acts as a ligand for the npr-22 receptor in vitro. In terms of biological role, acts as a ligand for the npr-22 receptor in vitro. This chain is FMRFamide-like neuropeptides 7, found in Caenorhabditis elegans.